A 195-amino-acid polypeptide reads, in one-letter code: Peptidyl-tRNA hydrolase (195 aa).

Tyr-17 is a tRNA binding site. Catalysis depends on His-22, which acts as the Proton acceptor. Tyr-68, Asn-70, and Asn-116 together coordinate tRNA.

Belongs to the PTH family. As to quaternary structure, monomer.

It localises to the cytoplasm. The catalysed reaction is an N-acyl-L-alpha-aminoacyl-tRNA + H2O = an N-acyl-L-amino acid + a tRNA + H(+). Hydrolyzes ribosome-free peptidyl-tRNAs (with 1 or more amino acids incorporated), which drop off the ribosome during protein synthesis, or as a result of ribosome stalling. Functionally, catalyzes the release of premature peptidyl moieties from peptidyl-tRNA molecules trapped in stalled 50S ribosomal subunits, and thus maintains levels of free tRNAs and 50S ribosomes. The polypeptide is Peptidyl-tRNA hydrolase (Shewanella putrefaciens (strain CN-32 / ATCC BAA-453)).